Consider the following 248-residue polypeptide: Small ribosomal subunit protein uS3 (248 aa).

Positions 38–106 (IREYLEKGLD…MVALNILEVK (69 aa)) constitute a KH type-2 domain. A disordered region spans residues 214–248 (SELNAPAQGRGRGDRNGRPRRGGQRRQRAQQKQEG). Residues 231-242 (RPRRGGQRRQRA) are compositionally biased toward basic residues.

It belongs to the universal ribosomal protein uS3 family. Part of the 30S ribosomal subunit. Forms a tight complex with proteins S10 and S14.

In terms of biological role, binds the lower part of the 30S subunit head. Binds mRNA in the 70S ribosome, positioning it for translation. The sequence is that of Small ribosomal subunit protein uS3 from Corynebacterium aurimucosum (strain ATCC 700975 / DSM 44827 / CIP 107346 / CN-1) (Corynebacterium nigricans).